The sequence spans 149 residues: C-type lectin domain family 2 member B (149 aa).

Residues Met-1–Lys-7 lie on the Cytoplasmic side of the membrane. A helical; Signal-anchor for type II membrane protein transmembrane segment spans residues Cys-8–Val-25. Residues Lys-26 to His-149 are Extracellular-facing. Residues Cys-35 and Cys-46 are joined by a disulfide bond. The region spanning Phe-42–Arg-145 is the C-type lectin domain. N-linked (GlcNAc...) asparagine glycans are attached at residues Asn-57, Asn-62, and Asn-100. 2 disulfide bridges follow: Cys-63–Cys-144 and Cys-123–Cys-136.

In terms of assembly, homodimer. Interacts with NKp80/KLRF1. (Microbial infection) Ubiquitinated by human herpesvirus 8 protein K5, leading to endolysosomal degradation. In terms of processing, N-linked glycosylated; required to enable surface expression and the extent of surface expression correlates with the number of functional conventional N-glycosylation sites. Expressed preferentially in lymphoid tissues, and in most hematopoietic cell types.

It is found in the cell membrane. Its subcellular location is the golgi apparatus membrane. Membrane-bound protein expressed on myeloid cells which acts as a ligand to stimulate the activating receptor NKp80/KLRF1, expressed on the surface of natural killer (NK) cells. In turn, stimulates NK-cell cytotoxicity and cytokine production leading to the cytolysis of malignant CLEC2B-expressing myeloid cells. The protein is C-type lectin domain family 2 member B (CLEC2B) of Homo sapiens (Human).